The chain runs to 276 residues: NH(3)-dependent NAD(+) synthetase (276 aa).

43-50 (GISGGVDS) lines the ATP pocket. Residue aspartate 49 participates in Mg(2+) binding. A deamido-NAD(+)-binding site is contributed by arginine 146. Threonine 166 serves as a coordination point for ATP. Position 171 (glutamate 171) interacts with Mg(2+). Deamido-NAD(+) contacts are provided by lysine 179 and aspartate 186. ATP is bound by residues lysine 195 and threonine 217. Deamido-NAD(+) is bound at residue 266–267 (HK).

This sequence belongs to the NAD synthetase family. In terms of assembly, homodimer.

It carries out the reaction deamido-NAD(+) + NH4(+) + ATP = AMP + diphosphate + NAD(+) + H(+). Its pathway is cofactor biosynthesis; NAD(+) biosynthesis; NAD(+) from deamido-NAD(+) (ammonia route): step 1/1. Its function is as follows. Catalyzes the ATP-dependent amidation of deamido-NAD to form NAD. Uses ammonia as a nitrogen source. The protein is NH(3)-dependent NAD(+) synthetase of Shewanella amazonensis (strain ATCC BAA-1098 / SB2B).